The primary structure comprises 425 residues: Serine--tRNA ligase (425 aa).

Residue 231 to 233 (TAE) coordinates L-serine. Residue 262–264 (RSE) participates in ATP binding. Residue Glu285 coordinates L-serine. Residue 349 to 352 (EISS) participates in ATP binding. Ser385 serves as a coordination point for L-serine.

This sequence belongs to the class-II aminoacyl-tRNA synthetase family. Type-1 seryl-tRNA synthetase subfamily. In terms of assembly, homodimer. The tRNA molecule binds across the dimer.

It localises to the cytoplasm. The catalysed reaction is tRNA(Ser) + L-serine + ATP = L-seryl-tRNA(Ser) + AMP + diphosphate + H(+). The enzyme catalyses tRNA(Sec) + L-serine + ATP = L-seryl-tRNA(Sec) + AMP + diphosphate + H(+). Its pathway is aminoacyl-tRNA biosynthesis; selenocysteinyl-tRNA(Sec) biosynthesis; L-seryl-tRNA(Sec) from L-serine and tRNA(Sec): step 1/1. Catalyzes the attachment of serine to tRNA(Ser). Is also able to aminoacylate tRNA(Sec) with serine, to form the misacylated tRNA L-seryl-tRNA(Sec), which will be further converted into selenocysteinyl-tRNA(Sec). This chain is Serine--tRNA ligase, found in Bacillus velezensis (strain DSM 23117 / BGSC 10A6 / LMG 26770 / FZB42) (Bacillus amyloliquefaciens subsp. plantarum).